The sequence spans 803 residues: MVRPAQVRAFSGLARSATSTRLIPSQCQNALRCASLPGSRLSALPLRATQITSSPLRKWHQIRNASAAATATLAEQAAADPEGLSQEEIISNIDAEEWKRISKVRNIGIAAHIDSGKTTATERVLFYTGRINSIHEVRGRDSVGAKMDSMDLEREKGITIQSAATFCDWVKKEDGKEEKYHFNLIDTPGHIDFTIEVERALRVLDGAVMILCAVSGVQSQTITVDRQMKRYNVPRISFVNKMDRMGANPFKAIDQINSKLRLPAAAVQVPIGAEDEFQGVVDLIRMKAIYNEGPRGEVIVEKDEIPEHLKPVAEERRRILIETLADVDDEIAEIFLDEREPTNEQIKDAIRRATIALKFTPVFMGSALADKSIQPMLDGVCDYLPNPSEVTNLALDQKRKEAQVKLLPYGSEPFVGLAFKLEESNFGQLTYIRVYQGTLRKGANVFNARNDKKVKVPRIVRMHSNEMEEVQEIGAGEICAVFGVDCASGDTFTDGQLAYTMSSMFVPEPVISLSIKPKNNKDSANFSKAMARFQREDPTFRVSYDAESEQTIISGMGELHLDIYVERMRREYKVDCETGQPQVAYRETIGRRVEFDHLLKKQSGGPGDYARVVGWMEPSDSLEENKFEEQIVGGAISEKFLFACEKGFNLATEKGPLIGHKVLGTKMVINDGATHMTDSSEMSFKNATQQAFRKAFMESQPHVLEPLMKTVVTAPIEFQGDVIGLLNKRNATINDSEIGVDEFTVYADCSLNGMFGFSSHLRAATQGKGEYTMEFSHYEKAPGQLQKELVQKYLKAQADRHKK.

A mitochondrion-targeting transit peptide spans 1–24; sequence MVRPAQVRAFSGLARSATSTRLIP. The tr-type G domain occupies 102-388; sequence SKVRNIGIAA…GVCDYLPNPS (287 aa). GTP-binding positions include 111–118, 186–190, and 240–243; these read AHIDSGKT, DTPGH, and NKMD.

This sequence belongs to the TRAFAC class translation factor GTPase superfamily. Classic translation factor GTPase family. EF-G/EF-2 subfamily.

Its subcellular location is the mitochondrion. Its pathway is protein biosynthesis; polypeptide chain elongation. Its function is as follows. Mitochondrial GTPase that catalyzes the GTP-dependent ribosomal translocation step during translation elongation. During this step, the ribosome changes from the pre-translocational (PRE) to the post-translocational (POST) state as the newly formed A-site-bound peptidyl-tRNA and P-site-bound deacylated tRNA move to the P and E sites, respectively. Catalyzes the coordinated movement of the two tRNA molecules, the mRNA and conformational changes in the ribosome. In Talaromyces marneffei (strain ATCC 18224 / CBS 334.59 / QM 7333) (Penicillium marneffei), this protein is Elongation factor G, mitochondrial (mef1).